A 418-amino-acid polypeptide reads, in one-letter code: Queuine tRNA-ribosyltransferase accessory subunit 2 (418 aa).

Cysteine 325, cysteine 327, cysteine 330, and histidine 356 together coordinate Zn(2+).

It belongs to the queuine tRNA-ribosyltransferase family. QTRT2 subfamily. As to quaternary structure, heterodimer of a catalytic subunit and an accessory subunit. Requires Zn(2+) as cofactor.

The protein resides in the cytoplasm. In terms of biological role, non-catalytic subunit of the queuine tRNA-ribosyltransferase (TGT) that catalyzes the base-exchange of a guanine (G) residue with queuine (Q) at position 34 (anticodon wobble position) in tRNAs with GU(N) anticodons (tRNA-Asp, -Asn, -His and -Tyr), resulting in the hypermodified nucleoside queuosine (7-(((4,5-cis-dihydroxy-2-cyclopenten-1-yl)amino)methyl)-7-deazaguanosine). This is Queuine tRNA-ribosyltransferase accessory subunit 2 from Drosophila yakuba (Fruit fly).